The following is a 141-amino-acid chain: Hemoglobin subunit alpha (141 aa).

A Globin domain is found at Val-1–Arg-141. Position 3 is a phosphoserine (Ser-3). Lys-7 carries the post-translational modification N6-succinyllysine. Phosphothreonine is present on Thr-8. At Lys-11 the chain carries N6-succinyllysine. A Phosphotyrosine modification is found at Tyr-24. Ser-35 bears the Phosphoserine mark. Position 40 is an N6-succinyllysine (Lys-40). Ser-49 is modified (phosphoserine). His-58 contributes to the O2 binding site. His-87 contributes to the heme b binding site. Ser-102 is subject to Phosphoserine. Residue Thr-108 is modified to Phosphothreonine. Ser-124 carries the phosphoserine modification. Phosphothreonine occurs at positions 134 and 137. Ser-138 carries the post-translational modification Phosphoserine.

It belongs to the globin family. Heterotetramer of two alpha chains and two beta chains. In terms of tissue distribution, red blood cells.

Involved in oxygen transport from the lung to the various peripheral tissues. Its function is as follows. Hemopressin acts as an antagonist peptide of the cannabinoid receptor CNR1. Hemopressin-binding efficiently blocks cannabinoid receptor CNR1 and subsequent signaling. In Rhinoceros unicornis (Greater Indian rhinoceros), this protein is Hemoglobin subunit alpha (HBA).